The sequence spans 260 residues: Winged helix repair factor 1 (260 aa).

3 winged helix domain regions span residues 38–110 (FTED…MVVM), 126–185 (SRAT…LAVP), and 186–260 (GAGR…ISET).

The protein belongs to the STK19 family. In terms of assembly, monomer in solution. Homodimer; when bound to DNA. Component of a transcription-coupled nucleotide excision repair (TC-NER) complex which assembles and interacts with the multiprotein RNA polymerase II complex when it stalls at DNA lesions.

The protein localises to the nucleus. Its function is as follows. DNA-binding protein which is required for efficient transcription-coupled nucleotide excision repair (TC-NER). Acts as part of a TC-NER complex which assembles and interacts with RNA polymerase II (RNAPII) when it stalls at DNA lesions. This Xenopus laevis (African clawed frog) protein is Winged helix repair factor 1.